A 269-amino-acid polypeptide reads, in one-letter code: 4-hydroxy-tetrahydrodipicolinate reductase (269 aa).

NAD(+) contacts are provided by residues 10 to 15 (GANGRM), E36, 99 to 101 (GTT), and 123 to 126 (AANF). H156 functions as the Proton donor/acceptor in the catalytic mechanism. H157 is a (S)-2,3,4,5-tetrahydrodipicolinate binding site. The active-site Proton donor is the K160. 166–167 (GT) serves as a coordination point for (S)-2,3,4,5-tetrahydrodipicolinate.

It belongs to the DapB family.

The protein localises to the cytoplasm. The enzyme catalyses (S)-2,3,4,5-tetrahydrodipicolinate + NAD(+) + H2O = (2S,4S)-4-hydroxy-2,3,4,5-tetrahydrodipicolinate + NADH + H(+). The catalysed reaction is (S)-2,3,4,5-tetrahydrodipicolinate + NADP(+) + H2O = (2S,4S)-4-hydroxy-2,3,4,5-tetrahydrodipicolinate + NADPH + H(+). It participates in amino-acid biosynthesis; L-lysine biosynthesis via DAP pathway; (S)-tetrahydrodipicolinate from L-aspartate: step 4/4. Its function is as follows. Catalyzes the conversion of 4-hydroxy-tetrahydrodipicolinate (HTPA) to tetrahydrodipicolinate. The sequence is that of 4-hydroxy-tetrahydrodipicolinate reductase from Neisseria gonorrhoeae (strain ATCC 700825 / FA 1090).